The sequence spans 419 residues: Diaminopimelate decarboxylase (419 aa).

N6-(pyridoxal phosphate)lysine is present on Lys56. Pyridoxal 5'-phosphate-binding positions include Gly234 and 274 to 277 (EPGR). 3 residues coordinate substrate: Arg277, Arg312, and Tyr316. The Proton donor role is filled by Cys343. The substrate site is built by Glu344 and Tyr372. Pyridoxal 5'-phosphate is bound at residue Tyr372.

It belongs to the Orn/Lys/Arg decarboxylase class-II family. LysA subfamily. Homodimer. Pyridoxal 5'-phosphate is required as a cofactor.

The catalysed reaction is meso-2,6-diaminopimelate + H(+) = L-lysine + CO2. It participates in amino-acid biosynthesis; L-lysine biosynthesis via DAP pathway; L-lysine from DL-2,6-diaminopimelate: step 1/1. Functionally, specifically catalyzes the decarboxylation of meso-diaminopimelate (meso-DAP) to L-lysine. The polypeptide is Diaminopimelate decarboxylase (Archaeoglobus fulgidus (strain ATCC 49558 / DSM 4304 / JCM 9628 / NBRC 100126 / VC-16)).